The following is a 365-amino-acid chain: Spore germination protein A2 (365 aa).

Transmembrane regions (helical) follow at residues 12–32, 45–65, 85–105, 122–142, 148–168, 187–207, 223–243, 250–270, 275–295, 303–323, and 338–358; these read TFQGISIVANTMLGAGLLTLP, WITLILEGFIFIFFIYLNTLI, WIGSIIGLLICGYFLGVASFE, PIQVIILTFICCGIYLMVGGL, LFPFYLTVTIIILLIVFGISF, IANSLTVVSISFLGMEVMLFL, LGFLIPIILYILTYIIVVGAL, TLIWPTISLFQSFELKGIFIE, FLLVVWIIQFFTTFVIYGYFA, FGLSTKTSMVIIGITVFYFSL, and LGYIFVSLFLLPFILFFIVAL.

This sequence belongs to the amino acid-polyamine-organocation (APC) superfamily. Spore germination protein (SGP) (TC 2.A.3.9) family.

The protein resides in the cell membrane. Involved in the germinative response to L-alanine. Could be an amino acid transporter. Forms a complex at the inner spore membrane which acts as a receptor for L-alanine, thus is involved in the stimulation of germination in response to alanine. Can stimulate germination in the absence of gerD and gerK gene products (fructose and glucose receptors, respectively), but the response is improved in their presence. The polypeptide is Spore germination protein A2 (gerAB) (Bacillus subtilis (strain 168)).